The following is a 230-amino-acid chain: Ribonuclease 1 (230 aa).

The first 22 residues, 1-22, serve as a signal peptide directing secretion; that stretch reads MKILLASLCLISLLVILPSVFS. Gln38 lines the RNA pocket. Cys44 and Cys50 are disulfide-bonded. RNA is bound by residues His65, Phe115, 118 to 119, and 122 to 123; these read HE and KH. The active-site Proton donor is His65. 3 disulfide bridges follow: Cys80–Cys126, Cys186–Cys221, and Cys202–Cys213. Glu119 is a catalytic residue. The active-site Proton acceptor is His123.

The protein belongs to the RNase T2 family.

The catalysed reaction is a ribonucleotidyl-ribonucleotide-RNA + H2O = a 3'-end 3'-phospho-ribonucleotide-RNA + a 5'-end dephospho-ribonucleoside-RNA + H(+). May remobilize phosphate, particularly when cells senesce or when phosphate becomes limiting. This Arabidopsis thaliana (Mouse-ear cress) protein is Ribonuclease 1 (RNS1).